Reading from the N-terminus, the 133-residue chain is Methylglyoxal synthase (133 aa).

The region spanning 1-133 (MPPKPRIALI…ARENGAAQAG (133 aa)) is the MGS-like domain. Substrate is bound by residues His12, Lys16, 38–41 (TGTT), and 58–59 (SG). Asp64 (proton donor/acceptor) is an active-site residue. A substrate-binding site is contributed by His91.

This sequence belongs to the methylglyoxal synthase family.

It carries out the reaction dihydroxyacetone phosphate = methylglyoxal + phosphate. Catalyzes the formation of methylglyoxal from dihydroxyacetone phosphate. The protein is Methylglyoxal synthase of Cupriavidus taiwanensis (strain DSM 17343 / BCRC 17206 / CCUG 44338 / CIP 107171 / LMG 19424 / R1) (Ralstonia taiwanensis (strain LMG 19424)).